The sequence spans 527 residues: Bifunctional purine biosynthesis protein PurH (527 aa).

An MGS-like domain is found at 1 to 149 (MTADLLPVRR…KNFARVAVAT (149 aa)).

It belongs to the PurH family.

It catalyses the reaction (6R)-10-formyltetrahydrofolate + 5-amino-1-(5-phospho-beta-D-ribosyl)imidazole-4-carboxamide = 5-formamido-1-(5-phospho-D-ribosyl)imidazole-4-carboxamide + (6S)-5,6,7,8-tetrahydrofolate. The enzyme catalyses IMP + H2O = 5-formamido-1-(5-phospho-D-ribosyl)imidazole-4-carboxamide. The protein operates within purine metabolism; IMP biosynthesis via de novo pathway; 5-formamido-1-(5-phospho-D-ribosyl)imidazole-4-carboxamide from 5-amino-1-(5-phospho-D-ribosyl)imidazole-4-carboxamide (10-formyl THF route): step 1/1. It participates in purine metabolism; IMP biosynthesis via de novo pathway; IMP from 5-formamido-1-(5-phospho-D-ribosyl)imidazole-4-carboxamide: step 1/1. The chain is Bifunctional purine biosynthesis protein PurH from Stenotrophomonas maltophilia (strain R551-3).